Here is a 306-residue protein sequence, read N- to C-terminus: MTNEFLHFEKISRQTWQSLHRKTTPPLTEEELESIKSFNDQISLQDVTDIYLPLAHLIQIYKRTKEDLAFSKGIFLQRESKSQPFIIGVSGSVAVGKSTTSRLLQILLSRTFTDATVELVTTDGFLYPNQTLIEQGILNRKGFPESYDMEALLNFLDRIKNGQDVDIPVYSHEVYDIVPEEKQSVKAADFVIVEGINVFQNPQNDRLYITDFFDFSIYVDAGVDDIESWYLDRFLKMLSLAQNDPDSYYYRFTQMPIGEVEAFAHQVWTSINLTNLQNYIEPTRNRAEVILHKSKNHEIDEIYLKK.

Residue 91-98 participates in ATP binding; it reads GSVAVGKS.

This sequence belongs to the prokaryotic pantothenate kinase family.

It is found in the cytoplasm. The catalysed reaction is (R)-pantothenate + ATP = (R)-4'-phosphopantothenate + ADP + H(+). It functions in the pathway cofactor biosynthesis; coenzyme A biosynthesis; CoA from (R)-pantothenate: step 1/5. The protein is Pantothenate kinase of Streptococcus pneumoniae serotype 2 (strain D39 / NCTC 7466).